We begin with the raw amino-acid sequence, 222 residues long: Interleukin-12 subunit alpha (222 aa).

The first 25 residues, 1 to 25, serve as a signal peptide directing secretion; that stretch reads MCPPRGLLLVTILVLLNHLDHLSLA. 3 disulfides stabilise this stretch: cysteine 40–cysteine 113, cysteine 67–cysteine 199, and cysteine 88–cysteine 126. N-linked (GlcNAc...) asparagine glycosylation is found at asparagine 42, asparagine 96, asparagine 110, and asparagine 183.

Belongs to the IL-6 superfamily. As to quaternary structure, heterodimer with IL12B; disulfide-linked. This heterodimer is known as interleukin IL-12. Heterodimer with EBI3/IL27B; not disulfide-linked. This heterodimer is known as interleukin IL-35. Interacts with NBR1; this interaction promotes IL-12 secretion.

It localises to the secreted. In terms of biological role, heterodimerizes with IL12B to form the IL-12 cytokine or with EBI3/IL27B to form the IL-35 cytokine. IL-12 is primarily produced by professional antigen-presenting cells (APCs) such as B-cells and dendritic cells (DCs) as well as macrophages and granulocytes and regulates T-cell and natural killer-cell responses, induces the production of interferon-gamma (IFN-gamma), favors the differentiation of T-helper 1 (Th1) cells and is an important link between innate resistance and adaptive immunity. Mechanistically, exerts its biological effects through a receptor composed of IL12R1 and IL12R2 subunits. Binding to the receptor results in the rapid tyrosine phosphorylation of a number of cellular substrates including the JAK family kinases TYK2 and JAK2. In turn, recruited STAT4 gets phosphorylated and translocates to the nucleus where it regulates cytokine/growth factor responsive genes. As part of IL-35, plays essential roles in maintaining the immune homeostasis of the liver microenvironment and also functions as an immune-suppressive cytokine. Mediates biological events through unconventional receptors composed of IL12RB2 and gp130/IL6ST heterodimers or homodimers. Signaling requires the transcription factors STAT1 and STAT4, which form a unique heterodimer that binds to distinct DNA sites. The polypeptide is Interleukin-12 subunit alpha (IL12A) (Felis catus (Cat)).